We begin with the raw amino-acid sequence, 1113 residues long: Protein translocase subunit SecA (1113 aa).

Residues glutamine 175, 193-197, and aspartate 694 each bind ATP; that span reads GEGKT. The span at 1042-1072 shows a compositional bias: basic and acidic residues; that stretch reads RHAAEQRTDMSKYRTQKDDIEAQQKAQRDAA. Positions 1042 to 1113 are disordered; that stretch reads RHAAEQRTDM…KFKQCHGRNL (72 aa). Residues cysteine 1097, cysteine 1099, cysteine 1108, and histidine 1109 each coordinate Zn(2+). Over residues 1103 to 1113 the composition is skewed to basic residues; sequence KKFKQCHGRNL.

It belongs to the SecA family. As to quaternary structure, monomer and homodimer. Part of the essential Sec protein translocation apparatus which comprises SecA, SecYEG and auxiliary proteins SecDF. Other proteins may also be involved. Zn(2+) serves as cofactor.

The protein resides in the cell inner membrane. The protein localises to the cytoplasm. It carries out the reaction ATP + H2O + cellular proteinSide 1 = ADP + phosphate + cellular proteinSide 2.. Its function is as follows. Part of the Sec protein translocase complex. Interacts with the SecYEG preprotein conducting channel. Has a central role in coupling the hydrolysis of ATP to the transfer of proteins into and across the cell membrane, serving as an ATP-driven molecular motor driving the stepwise translocation of polypeptide chains across the membrane. The chain is Protein translocase subunit SecA from Porphyromonas gingivalis (strain ATCC 33277 / DSM 20709 / CIP 103683 / JCM 12257 / NCTC 11834 / 2561).